Consider the following 217-residue polypeptide: 3,4-dihydroxy-2-butanone 4-phosphate synthase (217 aa).

Residues 37–38, Asp-42, 150–154, and Glu-174 each bind D-ribulose 5-phosphate; these read RE and RGGHT. Glu-38 serves as a coordination point for Mg(2+). Residue His-153 coordinates Mg(2+).

This sequence belongs to the DHBP synthase family. Homodimer. The cofactor is Mg(2+). Mn(2+) is required as a cofactor.

It carries out the reaction D-ribulose 5-phosphate = (2S)-2-hydroxy-3-oxobutyl phosphate + formate + H(+). Its pathway is cofactor biosynthesis; riboflavin biosynthesis; 2-hydroxy-3-oxobutyl phosphate from D-ribulose 5-phosphate: step 1/1. Catalyzes the conversion of D-ribulose 5-phosphate to formate and 3,4-dihydroxy-2-butanone 4-phosphate. This is 3,4-dihydroxy-2-butanone 4-phosphate synthase from Citrobacter koseri (strain ATCC BAA-895 / CDC 4225-83 / SGSC4696).